Reading from the N-terminus, the 692-residue chain is Elongation factor G (692 aa).

Residues 8-282 (EKTRNIGIMA…AVLDYLPAPT (275 aa)) form the tr-type G domain. Residues 17–24 (AHIDAGKT), 81–85 (DTPGH), and 135–138 (NKMD) contribute to the GTP site.

This sequence belongs to the TRAFAC class translation factor GTPase superfamily. Classic translation factor GTPase family. EF-G/EF-2 subfamily.

Its subcellular location is the cytoplasm. Catalyzes the GTP-dependent ribosomal translocation step during translation elongation. During this step, the ribosome changes from the pre-translocational (PRE) to the post-translocational (POST) state as the newly formed A-site-bound peptidyl-tRNA and P-site-bound deacylated tRNA move to the P and E sites, respectively. Catalyzes the coordinated movement of the two tRNA molecules, the mRNA and conformational changes in the ribosome. This chain is Elongation factor G, found in Bacillus velezensis (strain DSM 23117 / BGSC 10A6 / LMG 26770 / FZB42) (Bacillus amyloliquefaciens subsp. plantarum).